The sequence spans 882 residues: Leucine--tRNA ligase (882 aa).

Positions 43–53 (PYPSGNLHMGH) match the 'HIGH' region motif. The short motif at 632–636 (TMSKS) is the 'KMSKS' region element. An ATP-binding site is contributed by Lys635.

The protein belongs to the class-I aminoacyl-tRNA synthetase family.

The protein resides in the cytoplasm. It catalyses the reaction tRNA(Leu) + L-leucine + ATP = L-leucyl-tRNA(Leu) + AMP + diphosphate. The sequence is that of Leucine--tRNA ligase from Synechococcus sp. (strain JA-2-3B'a(2-13)) (Cyanobacteria bacterium Yellowstone B-Prime).